The chain runs to 320 residues: MKFTLEDQVVLITGGSQGLGKEFAKKYYNEAENTKIIIVSRSEARLLDTCNEIRIEAHLRRETTDEGQVQHKLAAPLDLEQRLFYYPCDLSCYESVECLFNALRDLDLLPTQTLCCAGGAVPKLFRGLSGHELNLGMDINYKTTLNVAHQIALAEQTKEHHLIIFSSATALYPFVGYSQYAPAKAAIKSLVAILRQELTNFRISCVYPGNFESEGFTVEQLTKPEITKLIEGPSDAIPCKQACDIIAKSLARGDDDVFTDFVGWMIMGMDLGLTAKKSRFVPLQWIFGVLSNILVVPFYMVGCSWYIRKWFRENDGKKAN.

Residues 1 to 254 (MKFTLEDQVV…IIAKSLARGD (254 aa)) lie on the Cytoplasmic side of the membrane. L11 serves as a coordination point for NADP(+). Residues G14, S16, and G18 each contribute to the NADPH site. The short motif at 14–18 (GGSQG) is the GXSXG element. L19 serves as a coordination point for NADP(+). Positions 41, 45, 89, and 90 each coordinate NADPH. NADP(+) is bound at residue D89. The active-site Proton donor is the S166. Positions 180, 184, and 213 each coordinate NADP(+). Catalysis depends on Y180, which acts as the Proton acceptor. The Lowers pKa of active site Tyr role is filled by K184. Residues 255–275 (DDVFTDFVGWMIMGMDLGLTA) traverse the membrane as a helical segment. The Lumenal segment spans residues 276–279 (KKSR). A helical membrane pass occupies residues 280–300 (FVPLQWIFGVLSNILVVPFYM). Residues 301 to 320 (VGCSWYIRKWFRENDGKKAN) are Cytoplasmic-facing.

It belongs to the short-chain dehydrogenases/reductases (SDR) family. As to quaternary structure, dimer or tetramer.

Its subcellular location is the endoplasmic reticulum membrane. The enzyme catalyses sphinganine + NADP(+) = 3-oxosphinganine + NADPH + H(+). The protein operates within lipid metabolism; sphingolipid metabolism. Functionally, catalyzes the reduction of 3'-oxosphinganine (3-ketodihydrosphingosine/KDS) to sphinganine (dihydrosphingosine/DHS), the second step of de novo sphingolipid biosynthesis. The polypeptide is 3-ketodihydrosphingosine reductase TSC10 (Saccharomyces cerevisiae (strain ATCC 204508 / S288c) (Baker's yeast)).